Here is a 602-residue protein sequence, read N- to C-terminus: Elongation factor 4 (602 aa).

In terms of domain architecture, tr-type G spans 7–189 (RNIRNFSIIA…AIVHRIPPPK (183 aa)). Residues 19 to 24 (DHGKST) and 136 to 139 (NKID) each bind GTP.

It belongs to the TRAFAC class translation factor GTPase superfamily. Classic translation factor GTPase family. LepA subfamily.

It localises to the cell inner membrane. It carries out the reaction GTP + H2O = GDP + phosphate + H(+). Its function is as follows. Required for accurate and efficient protein synthesis under certain stress conditions. May act as a fidelity factor of the translation reaction, by catalyzing a one-codon backward translocation of tRNAs on improperly translocated ribosomes. Back-translocation proceeds from a post-translocation (POST) complex to a pre-translocation (PRE) complex, thus giving elongation factor G a second chance to translocate the tRNAs correctly. Binds to ribosomes in a GTP-dependent manner. The sequence is that of Elongation factor 4 from Stenotrophomonas maltophilia (strain R551-3).